A 296-amino-acid chain; its full sequence is Glycine--tRNA ligase alpha subunit (296 aa).

The protein belongs to the class-II aminoacyl-tRNA synthetase family. As to quaternary structure, tetramer of two alpha and two beta subunits.

Its subcellular location is the cytoplasm. The catalysed reaction is tRNA(Gly) + glycine + ATP = glycyl-tRNA(Gly) + AMP + diphosphate. This chain is Glycine--tRNA ligase alpha subunit, found in Parasynechococcus marenigrum (strain WH8102).